The sequence spans 238 residues: Histone H1 (238 aa).

Low complexity-rich tracts occupy residues 21 to 34 (AAVD…AKAP) and 123 to 132 (AKAPAAVKPK). Disordered stretches follow at residues 21-57 (AAVD…AHPS) and 123-238 (AKAP…KAKK). One can recognise an H15 domain in the interval 54-124 (AHPSYAEMVS…KVKGSYKLAK (71 aa)). The span at 133 to 197 (TATKKKPAAK…AAKPKAKAAA (65 aa)) shows a compositional bias: basic residues. Low complexity-rich tracts occupy residues 198-208 (KKAPAAATPKK) and 217-230 (KRAT…PAKK).

The protein belongs to the histone H1/H5 family.

The protein localises to the nucleus. It localises to the chromosome. Histones H1 are necessary for the condensation of nucleosome chains into higher-order structures. The polypeptide is Histone H1 (Triticum aestivum (Wheat)).